The following is a 641-amino-acid chain: Chaperone protein DnaK (641 aa).

The residue at position 199 (threonine 199) is a Phosphothreonine; by autocatalysis. Residues 602–641 are disordered; that stretch reads MYADQADQAQQAGGQEEGQAKSADDAVDAEFEEVKDDDKK. Positions 604 to 615 are enriched in low complexity; that stretch reads ADQADQAQQAGG. Residues 626–641 show a composition bias toward acidic residues; sequence DAVDAEFEEVKDDDKK.

The protein belongs to the heat shock protein 70 family.

Acts as a chaperone. The protein is Chaperone protein DnaK of Marinobacter nauticus (strain ATCC 700491 / DSM 11845 / VT8) (Marinobacter aquaeolei).